A 293-amino-acid chain; its full sequence is Protein phosphatase 1 regulatory subunit 3B (293 aa).

Residues 129-237 (RQRIENDHVC…NNQGKNYRII (109 aa)) form the CBM21 domain.

In terms of assembly, interacts with glycogen, PPP1CC catalytic subunit of PP1 and PYGL. Associates with glycogen particles. Forms complexes with debranching enzyme, glycogen phosphorylase, glycogen synthase and phosphorylase kinase which is necessary for its regulation of PP1 activity.

Its function is as follows. Acts as a glycogen-targeting subunit for phosphatase PP1. Facilitates interaction of the PP1 with enzymes of the glycogen metabolism and regulates its activity. Suppresses the rate at which PP1 dephosphorylates (inactivates) glycogen phosphorylase and enhances the rate at which it activates glycogen synthase and therefore limits glycogen breakdown. This is Protein phosphatase 1 regulatory subunit 3B (ppp1r3b) from Danio rerio (Zebrafish).